Here is a 323-residue protein sequence, read N- to C-terminus: Methionyl-tRNA formyltransferase (323 aa).

113 to 116 lines the (6S)-5,6,7,8-tetrahydrofolate pocket; sequence SLLP.

The protein belongs to the Fmt family.

It catalyses the reaction L-methionyl-tRNA(fMet) + (6R)-10-formyltetrahydrofolate = N-formyl-L-methionyl-tRNA(fMet) + (6S)-5,6,7,8-tetrahydrofolate + H(+). Functionally, attaches a formyl group to the free amino group of methionyl-tRNA(fMet). The formyl group appears to play a dual role in the initiator identity of N-formylmethionyl-tRNA by promoting its recognition by IF2 and preventing the misappropriation of this tRNA by the elongation apparatus. The sequence is that of Methionyl-tRNA formyltransferase from Porphyromonas gingivalis (strain ATCC 33277 / DSM 20709 / CIP 103683 / JCM 12257 / NCTC 11834 / 2561).